Consider the following 1529-residue polypeptide: Ras guanine nucleotide exchange factor B (1529 aa).

Residues 135-186 adopt a coiled-coil conformation; sequence ISNIEKQLSNLVNLKSNTTEQTDRKYKTNLIDFKESIIQLEKDCKNLLKQSN. Disordered stretches follow at residues 290–357, 576–600, 680–724, 847–948, and 1168–1206; these read INTL…ISIN, TTTTTTTTTTTNTTTNPSNTIKSSH, KRNT…HIQQ, MGKE…NHNR, and QPPQITTQSTQPIQNSTTQPQPQPQPQQPQPQLQQSTNL. Composition is skewed to low complexity over residues 576-591, 683-724, and 853-887; these read TTTTTTTTTTTNTTTN, TSSG…HIQQ, and NSNTNNANNPNNNNNNNNNNNNNNNNNNNNNNNNE. Coiled coils occupy residues 722–798 and 871–898; these read IQQI…LNRK and NNNNNNNNNNNNNNNNENKNENKNETNK. The segment covering 888–898 has biased composition (basic and acidic residues); the sequence is NKNENKNETNK. Low complexity-rich tracts occupy residues 906 to 916, 924 to 940, 1168 to 1187, and 1197 to 1206; these read SSTSTLSSSTT, SSTNSPNSSTPNLLLPP, QPPQITTQSTQPIQNSTTQP, and QPQLQQSTNL. Positions 1075 to 1205 constitute an N-terminal Ras-GEF domain; sequence FYRSIKYASL…PQPQLQQSTN (131 aa). Residues 1282–1517 enclose the Ras-GEF domain; that stretch reads SSTDIAEQLT…YEQSILLEPK (236 aa).

It localises to the cytoplasm. Promotes the exchange of Ras-bound GDP by GTP. Involved in phagocytosis, fluid-phase endocytosis, regulation of macropinocytosis and control of cell movement. This is Ras guanine nucleotide exchange factor B (gefB) from Dictyostelium discoideum (Social amoeba).